Reading from the N-terminus, the 351-residue chain is Phosphoribosylformylglycinamidine cyclo-ligase (351 aa).

This sequence belongs to the AIR synthase family.

It is found in the cytoplasm. The enzyme catalyses 2-formamido-N(1)-(5-O-phospho-beta-D-ribosyl)acetamidine + ATP = 5-amino-1-(5-phospho-beta-D-ribosyl)imidazole + ADP + phosphate + H(+). The protein operates within purine metabolism; IMP biosynthesis via de novo pathway; 5-amino-1-(5-phospho-D-ribosyl)imidazole from N(2)-formyl-N(1)-(5-phospho-D-ribosyl)glycinamide: step 2/2. This is Phosphoribosylformylglycinamidine cyclo-ligase from Azotobacter vinelandii (strain DJ / ATCC BAA-1303).